We begin with the raw amino-acid sequence, 153 residues long: Histone H2B.3 (153 aa).

2 stretches are compositionally biased toward basic and acidic residues: residues 1–28 and 36–53; these read MAPK…EKAP and EKRL…EGRK. The segment at 1–61 is disordered; that stretch reads MAPKAEKKPA…RKAGRKKAKK (61 aa). 2 positions are modified to N6-acetyllysine: Lys-7 and Lys-37. Lys-149 is covalently cross-linked (Glycyl lysine isopeptide (Lys-Gly) (interchain with G-Cter in ubiquitin)).

This sequence belongs to the histone H2B family. As to quaternary structure, the nucleosome is a histone octamer containing two molecules each of H2A, H2B, H3 and H4 assembled in one H3-H4 heterotetramer and two H2A-H2B heterodimers. The octamer wraps approximately 147 bp of DNA. Post-translationally, can be acetylated to form H2BK6ac and H2BK33ac. In terms of processing, monoubiquitinated by BRE1 to form H2BK143ub1 and deubiquitinated by UBP26. Required for heterochromatic histone H3 di- and trimethylation at H3K4me. May give a specific tag for epigenetic transcriptional activation.

It localises to the nucleus. It is found in the chromosome. In terms of biological role, core component of nucleosome. Nucleosomes wrap and compact DNA into chromatin, limiting DNA accessibility to the cellular machineries which require DNA as a template. Histones thereby play a central role in transcription regulation, DNA repair, DNA replication and chromosomal stability. DNA accessibility is regulated via a complex set of post-translational modifications of histones, also called histone code, and nucleosome remodeling. The protein is Histone H2B.3 (H2B.3) of Oryza sativa subsp. japonica (Rice).